The sequence spans 120 residues: NAD(P)H-quinone oxidoreductase subunit 3, chloroplastic (120 aa).

The next 3 membrane-spanning stretches (helical) occupy residues 9–29 (IFWAFLVISSVIPILAFIISG), 64–84 (MFALVFVVFDVETVFLYPWAM), and 88–108 (VLGVSVFIEALIFVLILIVGS).

This sequence belongs to the complex I subunit 3 family. As to quaternary structure, NDH is composed of at least 16 different subunits, 5 of which are encoded in the nucleus.

It localises to the plastid. It is found in the chloroplast thylakoid membrane. It catalyses the reaction a plastoquinone + NADH + (n+1) H(+)(in) = a plastoquinol + NAD(+) + n H(+)(out). The catalysed reaction is a plastoquinone + NADPH + (n+1) H(+)(in) = a plastoquinol + NADP(+) + n H(+)(out). NDH shuttles electrons from NAD(P)H:plastoquinone, via FMN and iron-sulfur (Fe-S) centers, to quinones in the photosynthetic chain and possibly in a chloroplast respiratory chain. The immediate electron acceptor for the enzyme in this species is believed to be plastoquinone. Couples the redox reaction to proton translocation, and thus conserves the redox energy in a proton gradient. The chain is NAD(P)H-quinone oxidoreductase subunit 3, chloroplastic from Lemna minor (Common duckweed).